The chain runs to 552 residues: CTP synthase (552 aa).

The tract at residues 1-270 (MTKFVFVTGG…DGLICDKLRL (270 aa)) is amidoligase domain. Serine 13 is a CTP binding site. Residue serine 13 coordinates UTP. ATP is bound by residues 14 to 19 (SLGKGI) and aspartate 71. Residues aspartate 71 and glutamate 144 each contribute to the Mg(2+) site. Residues 151 to 153 (DIE), 191 to 196 (KTKPTQ), and lysine 227 each bind CTP. Residues 191 to 196 (KTKPTQ) and lysine 227 each bind UTP. Residues 295-548 (QIAMVGKYVE…IKAAVEHQKP (254 aa)) enclose the Glutamine amidotransferase type-1 domain. Glycine 357 contributes to the L-glutamine binding site. The active-site Nucleophile; for glutamine hydrolysis is the cysteine 384. Residues 385–388 (LGMQ), glutamate 408, and arginine 474 contribute to the L-glutamine site. Catalysis depends on residues histidine 521 and glutamate 523.

Belongs to the CTP synthase family. Homotetramer.

It carries out the reaction UTP + L-glutamine + ATP + H2O = CTP + L-glutamate + ADP + phosphate + 2 H(+). The catalysed reaction is L-glutamine + H2O = L-glutamate + NH4(+). It catalyses the reaction UTP + NH4(+) + ATP = CTP + ADP + phosphate + 2 H(+). It participates in pyrimidine metabolism; CTP biosynthesis via de novo pathway; CTP from UDP: step 2/2. Allosterically activated by GTP, when glutamine is the substrate; GTP has no effect on the reaction when ammonia is the substrate. The allosteric effector GTP functions by stabilizing the protein conformation that binds the tetrahedral intermediate(s) formed during glutamine hydrolysis. Inhibited by the product CTP, via allosteric rather than competitive inhibition. Its function is as follows. Catalyzes the ATP-dependent amination of UTP to CTP with either L-glutamine or ammonia as the source of nitrogen. Regulates intracellular CTP levels through interactions with the four ribonucleotide triphosphates. This Acidovorax ebreus (strain TPSY) (Diaphorobacter sp. (strain TPSY)) protein is CTP synthase.